Reading from the N-terminus, the 221-residue chain is Ribose-5-phosphate isomerase A (221 aa).

Substrate-binding positions include 26-29, 81-84, and 94-97; these read TGST, DGAD, and KGGG. The active-site Proton acceptor is glutamate 103. Lysine 121 is a binding site for substrate.

It belongs to the ribose 5-phosphate isomerase family. In terms of assembly, homodimer.

The catalysed reaction is aldehydo-D-ribose 5-phosphate = D-ribulose 5-phosphate. It participates in carbohydrate degradation; pentose phosphate pathway; D-ribose 5-phosphate from D-ribulose 5-phosphate (non-oxidative stage): step 1/1. Its function is as follows. Catalyzes the reversible conversion of ribose-5-phosphate to ribulose 5-phosphate. The protein is Ribose-5-phosphate isomerase A of Bacillus mycoides (strain KBAB4) (Bacillus weihenstephanensis).